The following is a 147-amino-acid chain: 3-dehydroquinate dehydratase (147 aa).

The active-site Proton acceptor is tyrosine 24. Residues asparagine 73, histidine 79, and aspartate 86 each coordinate substrate. The active-site Proton donor is the histidine 99. Residues 100-101 and arginine 110 each bind substrate; that span reads LS.

It belongs to the type-II 3-dehydroquinase family. As to quaternary structure, homododecamer.

It catalyses the reaction 3-dehydroquinate = 3-dehydroshikimate + H2O. It participates in metabolic intermediate biosynthesis; chorismate biosynthesis; chorismate from D-erythrose 4-phosphate and phosphoenolpyruvate: step 3/7. Its function is as follows. Catalyzes a trans-dehydration via an enolate intermediate. The protein is 3-dehydroquinate dehydratase of Hyphomonas neptunium (strain ATCC 15444).